We begin with the raw amino-acid sequence, 107 residues long: uncharacterized protein (107 aa).

Residues 13-33 traverse the membrane as a helical segment; the sequence is VLIVTFLSSFIFIVWLPVALV.

The protein localises to the membrane. This is an uncharacterized protein from Saccharomyces cerevisiae (strain ATCC 204508 / S288c) (Baker's yeast).